The sequence spans 881 residues: DNA mismatch repair protein MutS (881 aa).

Residue 626–633 (GPNMAGKS) participates in ATP binding.

It belongs to the DNA mismatch repair MutS family.

In terms of biological role, this protein is involved in the repair of mismatches in DNA. It is possible that it carries out the mismatch recognition step. This protein has a weak ATPase activity. This is DNA mismatch repair protein MutS from Desulfosudis oleivorans (strain DSM 6200 / JCM 39069 / Hxd3) (Desulfococcus oleovorans).